The sequence spans 175 residues: Putative carbonic anhydrase-like protein YbcF (175 aa).

Belongs to the beta-class carbonic anhydrase family.

The polypeptide is Putative carbonic anhydrase-like protein YbcF (ybcF) (Bacillus subtilis (strain 168)).